Here is a 147-residue protein sequence, read N- to C-terminus: Bis(5'-nucleosyl)-tetraphosphatase [asymmetrical] (147 aa).

Ala-2 is modified (N-acetylalanine). A Nudix hydrolase domain is found at 2–139 (ALRACGLIIF…DMKAVLQEGH (138 aa)). The short motif at 43–64 (GHVEPGESDLQTALRETQEEAG) is the Nudix box element.

It belongs to the Nudix hydrolase family. The cofactor is a divalent metal cation.

The enzyme catalyses P(1),P(4)-bis(5'-guanosyl) tetraphosphate + H2O = GMP + GTP + 2 H(+). It catalyses the reaction a 5'-end CoA-ribonucleoside in mRNA + H2O = a 5'-end phospho-adenosine-phospho-ribonucleoside in mRNA + (R)-4'-phosphopantetheine + 2 H(+). It carries out the reaction a 5'-end FAD-phospho-ribonucleoside in mRNA + H2O = a 5'-end phospho-adenosine-phospho-ribonucleoside in mRNA + FMN + 2 H(+). Inhibited by fluoride ions. Its function is as follows. Catalyzes the asymmetric hydrolysis of diadenosine 5',5'''-P1,P4-tetraphosphate (Ap4A) to yield AMP and ATP. Exhibits decapping activity towards FAD-capped RNAs and dpCoA-capped RNAs in vitro. The sequence is that of Bis(5'-nucleosyl)-tetraphosphatase [asymmetrical] (NUDT2) from Sus scrofa (Pig).